The sequence spans 191 residues: Ankyrin repeat domain-containing protein 22 (191 aa).

ANK repeat units follow at residues 39 to 68 (NGDTPLICACRRGHLRIVSFLLRRNADVNL), 72 to 100 (KERTCLHYAVKKRFTFFDYLLIILLMPVL), 101 to 130 (LIGYFLMVSKTKQNETLVRMLLNAGVEVNA), and 134 to 163 (DGYTALHYACQMKNQTLIPLLLEAHADPMI).

The chain is Ankyrin repeat domain-containing protein 22 (Ankrd22) from Mus musculus (Mouse).